The chain runs to 148 residues: 3-dehydroquinate dehydratase (148 aa).

The active-site Proton acceptor is the tyrosine 23. Substrate contacts are provided by asparagine 75, histidine 81, and aspartate 88. The active-site Proton donor is the histidine 101. Residues leucine 102–serine 103 and arginine 112 contribute to the substrate site.

This sequence belongs to the type-II 3-dehydroquinase family. In terms of assembly, homododecamer.

The enzyme catalyses 3-dehydroquinate = 3-dehydroshikimate + H2O. The protein operates within metabolic intermediate biosynthesis; chorismate biosynthesis; chorismate from D-erythrose 4-phosphate and phosphoenolpyruvate: step 3/7. Catalyzes a trans-dehydration via an enolate intermediate. The chain is 3-dehydroquinate dehydratase from Xanthomonas axonopodis pv. citri (strain 306).